The chain runs to 139 residues: Large ribosomal subunit protein uL13 (139 aa).

This sequence belongs to the universal ribosomal protein uL13 family. Part of the 50S ribosomal subunit.

Its function is as follows. This protein is one of the early assembly proteins of the 50S ribosomal subunit, although it is not seen to bind rRNA by itself. It is important during the early stages of 50S assembly. In Methanococcoides burtonii (strain DSM 6242 / NBRC 107633 / OCM 468 / ACE-M), this protein is Large ribosomal subunit protein uL13.